We begin with the raw amino-acid sequence, 402 residues long: Serine/threonine transporter SstT (402 aa).

8 consecutive transmembrane segments (helical) span residues 17–37 (IAIG…ITVI), 44–64 (FVGG…ANAL), 78–98 (IIVL…ISHY), 138–158 (ALSQ…GFAM), 179–199 (IVRW…FDTI), 212–232 (VLIL…NPII), 295–315 (MAGA…TLGI), and 336–356 (ASGI…LFGI).

Belongs to the dicarboxylate/amino acid:cation symporter (DAACS) (TC 2.A.23) family.

Its subcellular location is the cell membrane. It carries out the reaction L-serine(in) + Na(+)(in) = L-serine(out) + Na(+)(out). The catalysed reaction is L-threonine(in) + Na(+)(in) = L-threonine(out) + Na(+)(out). Involved in the import of serine and threonine into the cell, with the concomitant import of sodium (symport system). The polypeptide is Serine/threonine transporter SstT (Streptococcus thermophilus (strain CNRZ 1066)).